A 1196-amino-acid chain; its full sequence is METFTGYLKSTCFHQISPYPPSIMSIQVKVHANILILSFIECLRMPMHRQIRYSLKNNTITYFNESDVDWSSAIDYQCPDCLIGKSTKHRHIKGSRLKYQNSYEPFQYLHTDIFGPVHNLPKSAPSYFISFTDETTKLRWVYPLHDRREDSILDVFTTILAFIKNQFQASVLVIQMDRGSEYTNRTLHKFLEKNGITPCYTTTADSRAHGVAERLNRTLLDDCRTQLQCSGLPNHLWFSAIEFSTIVRNSLASPKSKKSARQHAGLAGLDISTLLPFGQPVIVNDHNPNSKIHPRGIPGYALHPSRNSYGYIIYLPSLKKTVDTTNYVILQGKESRLDQFNYDALTFDEDLNRLTASYHSFIASNEIQESNDLNIESDHDFQSDIELHPEQPRNVLSKAVSPTDSTPPSTHTEDSKRVSKTNIRAPREVDPNISESNILPSKKRSSTPQISNIESTGSGGMHKLNVPLLAPMSQSNTHESSHASKSKDFRHSDSYSENETNHTNVPISSTGGTNNKTVPQISDQETEKRIIHRSPSIDASPPENNSSHNIVPIKTPTTVSEQNTEESIIADLPLPDLPPESPTEFPDPFKELPPINSHQTNSSLGGIGDSNAYTTINSKKRSLEDNETEIKVSRDTWNTKNMRSLEPPRSKKRIHLIAAVKAVKSIKPIRTTLRYDEAITYNKDIKEKEKYIEAYHKEVNQLLKMNTWDTDKYYDRKEIDPKRVINSMFIFNKKRDGTHKARFVARGDIQHPDTYDTGMQSNTVHHYALMTSLSLALDNNYYITQLDISSAYLYADIKEELYIRPPPHLGMNDKLIRLKKSLYGLKQSGANWYETIKSYLIKQCGMEEVRGWSCVFKNSQVTICLFVDDMILFSKDLNANKKIITTLKKQYDTKIINLGESDNEIQYDILGLEIKYQRGKYMKLGMEKSLTEKLPKLNVPLNPKGKKLRAPGQPGLYIDQDELEIDEDEYKEKVHEMQKLIGLASYVGYKFRFDLLYYINTLAQHILFPSRQVLDMTYELIQFMWDTRDKQLIWHKNKPTEPDNKLVAISDASYGNQPYYKSQIGNIYLLNGKVIGGKSTKASLTCTSTTEAEIHAISESVPLLNNLSYLIQELNKKPIIKGLLTDSRSTISIIKSTNEEKFRNRFFGTKAMRLRDEVSGNNLYVYYIETKKNIADVMTKPLPIKTFKLLTNKWIH.

The Integrase catalytic domain maps to 101 to 276; the sequence is NSYEPFQYLH…AGLDISTLLP (176 aa). Residues Asp-112 and Asp-177 each coordinate Mg(2+). 3 disordered regions span residues 397–528, 533–552, and 571–628; these read SKAV…ETEK, RSPS…NIVP, and DLPL…DNET. Positions 401–410 are enriched in low complexity; that stretch reads SPTDSTPPST. The segment covering 446-456 has biased composition (polar residues); that stretch reads STPQISNIEST. A compositionally biased stretch (basic and acidic residues) spans 479–494; the sequence is ESSHASKSKDFRHSDS. 2 stretches are compositionally biased toward polar residues: residues 495–523 and 542–552; these read YSEN…QISD and PENNSSHNIVP. The Bipartite nuclear localization signal signature appears at 619-653; the sequence is KKRSLEDNETEIKVSRDTWNTKNMRSLEPPRSKKR. In terms of domain architecture, Reverse transcriptase Ty1/copia-type spans 779-917; that stretch reads NNYYITQLDI…DILGLEIKYQ (139 aa). Mg(2+) is bound by residues Asp-787, Asp-868, Asp-869, Asp-1051, Glu-1093, and Asp-1126. In terms of domain architecture, RNase H Ty1/copia-type spans 1051–1193; it reads DASYGNQPYY…IKTFKLLTNK (143 aa).

Post-translationally, initially, virus-like particles (VLPs) are composed of the structural unprocessed proteins Gag and Gag-Pol, and also contain the host initiator methionine tRNA (tRNA(i)-Met) which serves as a primer for minus-strand DNA synthesis, and a dimer of genomic Ty RNA. Processing of the polyproteins occurs within the particle and proceeds by an ordered pathway, called maturation. First, the protease (PR) is released by autocatalytic cleavage of the Gag-Pol polyprotein yielding capsid protein p45 and a Pol-p154 precursor protein. This cleavage is a prerequisite for subsequent processing of Pol-p154 at the remaining sites to release the mature structural and catalytic proteins. Maturation takes place prior to the RT reaction and is required to produce transposition-competent VLPs.

The protein localises to the cytoplasm. It localises to the nucleus. The enzyme catalyses DNA(n) + a 2'-deoxyribonucleoside 5'-triphosphate = DNA(n+1) + diphosphate. It carries out the reaction Endonucleolytic cleavage to 5'-phosphomonoester.. Functionally, reverse transcriptase/ribonuclease H (RT) is a multifunctional enzyme that catalyzes the conversion of the retro-elements RNA genome into dsDNA within the VLP. The enzyme displays a DNA polymerase activity that can copy either DNA or RNA templates, and a ribonuclease H (RNase H) activity that cleaves the RNA strand of RNA-DNA heteroduplexes during plus-strand synthesis and hydrolyzes RNA primers. The conversion leads to a linear dsDNA copy of the retrotransposon that includes long terminal repeats (LTRs) at both ends. Its function is as follows. Integrase (IN) targets the VLP to the nucleus, where a subparticle preintegration complex (PIC) containing at least integrase and the newly synthesized dsDNA copy of the retrotransposon must transit the nuclear membrane. Once in the nucleus, integrase performs the integration of the dsDNA into the host genome. This chain is Truncated transposon Ty1-A Gag-Pol polyprotein (TY1B-A), found in Saccharomyces cerevisiae (strain ATCC 204508 / S288c) (Baker's yeast).